The primary structure comprises 356 residues: tRNA N6-adenosine threonylcarbamoyltransferase (356 aa).

3 residues coordinate a divalent metal cation: H124, H128, and Y145. Substrate contacts are provided by residues 145–149, D177, G192, E196, and N287; that span reads YVSGG. D315 is an a divalent metal cation binding site.

It belongs to the KAE1 / TsaD family. Component of the EKC/KEOPS complex composed of at least BUD32, CGI121, GON7, KAE1 and PCC1; the whole complex dimerizes. A divalent metal cation is required as a cofactor.

It localises to the cytoplasm. The protein localises to the nucleus. It carries out the reaction L-threonylcarbamoyladenylate + adenosine(37) in tRNA = N(6)-L-threonylcarbamoyladenosine(37) in tRNA + AMP + H(+). In terms of biological role, component of the EKC/KEOPS complex that is required for the formation of a threonylcarbamoyl group on adenosine at position 37 (t(6)A37) in tRNAs that read codons beginning with adenine. The complex is probably involved in the transfer of the threonylcarbamoyl moiety of threonylcarbamoyl-AMP (TC-AMP) to the N6 group of A37. KAE1 likely plays a direct catalytic role in this reaction, but requires other protein(s) of the complex to fulfill this activity. The EKC/KEOPS complex also promotes both telomere uncapping and telomere elongation. The complex is required for efficient recruitment of transcriptional coactivators. The polypeptide is tRNA N6-adenosine threonylcarbamoyltransferase (Yarrowia lipolytica (strain CLIB 122 / E 150) (Yeast)).